The sequence spans 445 residues: AAPGSSPHQVYNITWEVTNGDRETVWAISGNHPLWTWWPVLTPDLCMLALHGPPHWGLEYQAPYSSPPGPPCCSGSGGSSPGCSRDCNEPLTSLTPRCNTAWNRLKLDQVTHKSSEGFYVCPGSHRPREAKSCGGPDSFYCASWGCETTGRAYWKPSSSWDYITVDNNLTTNQAVQVCKDNKWCNPLAIQFTNAGRQVTSWITGHYWGLRLYVSGQDPGLTFGIRLKYQNLGPRVPIGPNPVLADQLSFPLPNPLPKPAKSPPVSNSTPTMISPSPTPTQPPPAGTGDRLLNLVQGAYQALNLTNPDKTQECWLCLVSGPPYYEGVAVLGTYSNHTSAPTNCSVASQHKLTLSEVTGRGLCIGTVPKTHQALCNTTLKTNKGSYYLVAPAGTTWACNTGLTPCLSATVLNRTTDYCVLVELWPRVTYHPPSYVYSQFEKSYRHKR.

At 1-445 (AAPGSSPHQV…QFEKSYRHKR (445 aa)) the chain is on the extracellular side. An N-linked (GlcNAc...) (hybrid) asparagine; by host glycan is attached at N12. Cystine bridges form between C46–C98, C72–C87, C73–C83, C121–C141, and C133–C146. H55 is a Zn(2+) binding site. Zn(2+) is bound at residue D86. N168 carries N-linked (GlcNAc...) (high mannose) asparagine; by host glycosylation. An intrachain disulfide couples C178 to C184. The interval 253–286 (NPLPKPAKSPPVSNSTPTMISPSPTPTQPPPAGT) is disordered. Positions 262–274 (PPVSNSTPTMISP) are enriched in low complexity. N266 carries an N-linked (GlcNAc...) (polylactosaminoglycan) asparagine; by host glycan. The O-linked (GalNAc...) threonine; by host glycan is linked to T268. O-linked (GalNAc...) serine; by host glycosylation is found at S273 and S275. Over residues 275–284 (SPTPTQPPPA) the composition is skewed to pro residues. Residues T277 and T279 are each glycosylated (O-linked (GalNAc...) threonine; by host). N302 is a glycosylation site (N-linked (GlcNAc...) (polylactosaminoglycan) asparagine; by host). O-linked (GalNAc...) threonine; by host glycosylation is found at T304 and T309. C312 and C315 are joined by a disulfide. The CXXC signature appears at 312 to 315 (CWLC). N334 and N341 each carry an N-linked (GlcNAc...) (high mannose) asparagine; by host; alternate glycan. N334 and N341 each carry an N-linked (GlcNAc...) (hybrid) asparagine; by host; alternate glycan. N-linked (GlcNAc...) (polylactosaminoglycan) asparagine; by host; alternate glycosylation is found at N334 and N341. 3 disulfide bridges follow: C342–C396, C361–C373, and C403–C416. The N-linked (GlcNAc...) (polylactosaminoglycan) asparagine; by host glycan is linked to N374. A glycan (N-linked (GlcNAc...) (high mannose) asparagine; by host; alternate) is linked at N410. An N-linked (GlcNAc...) (polylactosaminoglycan) asparagine; by host; alternate glycan is attached at N410.

In terms of assembly, the mature envelope protein (Env) consists of a trimer of SU-TM heterodimers attached by a labile interchain disulfide bond. In terms of processing, specific enzymatic cleavages in vivo yield mature proteins. Envelope glycoproteins are synthesized as an inactive precursor that is N-glycosylated and processed likely by host cell furin or by a furin-like protease in the Golgi to yield the mature SU and TM proteins. The cleavage site between SU and TM requires the minimal sequence [KR]-X-[KR]-R.

Its subcellular location is the virion membrane. It is found in the host cell membrane. Its function is as follows. The surface protein (SU) attaches the virus to the host cell by binding to its receptor. This interaction triggers the refolding of the transmembrane protein (TM) and is thought to activate its fusogenic potential by unmasking its fusion peptide. Fusion occurs at the host cell plasma membrane. In Friend murine leukemia virus (FrMLV), this protein is Envelope glycoprotein (env).